A 911-amino-acid chain; its full sequence is Brevican core protein (911 aa).

The first 22 residues, 1–22 (MAQLFLPLLAALVLAQAPAALA), serve as a signal peptide directing secretion. The Ig-like V-type domain maps to 36-155 (RVRIAGDAPL…SSDAVEVKVK (120 aa)). Cystine bridges form between cysteine 57–cysteine 137, cysteine 179–cysteine 250, cysteine 203–cysteine 224, cysteine 277–cysteine 352, and cysteine 301–cysteine 322. Asparagine 130 is a glycosylation site (N-linked (GlcNAc...) asparagine). Link domains are found at residues 157–252 (VVFL…YCYA) and 257–354 (GELF…YCFR). An N-linked (GlcNAc...) asparagine glycan is attached at asparagine 337. Positions 391–641 (QLPQEATESE…PTDSASRGGV (251 aa)) are disordered. Serine 418 is subject to Phosphoserine. Residue serine 418 is glycosylated (O-linked (Xyl...) (chondroitin sulfate) serine). Residues 454-478 (EEEEKYEDEEEKEEEEEEEEVEDEA) are compositionally biased toward acidic residues. O-glycosylated at two sites regions lie at residues 520 to 530 (SPLPDGESEAS) and 540 to 545 (TETLPT). An O-glycosylated at one site region spans residues 569 to 575 (TGGPELS). The segment covering 612–627 (EDNSGRTAPAGTSVQA) has biased composition (polar residues). Alanine 646 is lipidated: GPI-anchor amidated alanine. In terms of domain architecture, EGF-like spans 646–682 (ASGDCVPSPCHNGGTCLEEEEGVRCLCLPGYGGDLCD). 8 cysteine pairs are disulfide-bonded: cysteine 650–cysteine 661, cysteine 655–cysteine 670, cysteine 672–cysteine 681, cysteine 688–cysteine 699, cysteine 716–cysteine 808, cysteine 784–cysteine 800, cysteine 815–cysteine 858, and cysteine 844–cysteine 871. Residues 695-809 (FQGACYKHFS…CNYHLSYTCK (115 aa)) enclose the C-type lectin domain. A Sushi domain is found at 813–873 (VSCGPPPELP…WEAPQISCVP (61 aa)). Residues serine 905 and serine 906 are each glycosylated (O-linked (GalNAc...) serine).

This sequence belongs to the aggrecan/versican proteoglycan family. As to quaternary structure, interacts with TNR. O-glycosylated; contains chondroitin sulfate. O-glycosylated with a core 1 or possibly core 8 glycan. In terms of tissue distribution, expressed in the retina, specifically in the inner nuclear layer, inner plexiform layer and ganglion cell layer (at protein level). Detected in cerebrospinal fluid (at protein level). Detected in urine (at protein level).

It is found in the secreted. The protein resides in the extracellular space. It localises to the extracellular matrix. The protein localises to the membrane. In terms of biological role, may play a role in the terminally differentiating and the adult nervous system during postnatal development. Could stabilize interactions between hyaluronan (HA) and brain proteoglycans. The protein is Brevican core protein (BCAN) of Homo sapiens (Human).